The primary structure comprises 207 residues: High frequency lysogenization protein HflD homolog (207 aa).

The protein belongs to the HflD family.

The protein resides in the cytoplasm. The protein localises to the cell inner membrane. In Pseudomonas fluorescens (strain ATCC BAA-477 / NRRL B-23932 / Pf-5), this protein is High frequency lysogenization protein HflD homolog.